Consider the following 450-residue polypeptide: UDP-N-acetylmuramoylalanine--D-glutamate ligase (450 aa).

An ATP-binding site is contributed by 119-125 (GSNGKTT).

The protein belongs to the MurCDEF family.

Its subcellular location is the cytoplasm. It carries out the reaction UDP-N-acetyl-alpha-D-muramoyl-L-alanine + D-glutamate + ATP = UDP-N-acetyl-alpha-D-muramoyl-L-alanyl-D-glutamate + ADP + phosphate + H(+). The protein operates within cell wall biogenesis; peptidoglycan biosynthesis. Functionally, cell wall formation. Catalyzes the addition of glutamate to the nucleotide precursor UDP-N-acetylmuramoyl-L-alanine (UMA). The sequence is that of UDP-N-acetylmuramoylalanine--D-glutamate ligase from Bacillus thuringiensis (strain Al Hakam).